We begin with the raw amino-acid sequence, 230 residues long: Triosephosphate isomerase (230 aa).

Residue 9-11 (NYK) coordinates substrate. His-93 serves as the catalytic Electrophile. Glu-141 (proton acceptor) is an active-site residue. Residues Ile-146, Gly-180, and 201 to 202 (AS) contribute to the substrate site.

The protein belongs to the triosephosphate isomerase family. Homotetramer; dimer of dimers.

Its subcellular location is the cytoplasm. The catalysed reaction is D-glyceraldehyde 3-phosphate = dihydroxyacetone phosphate. It functions in the pathway carbohydrate biosynthesis; gluconeogenesis. Its pathway is carbohydrate degradation; glycolysis; D-glyceraldehyde 3-phosphate from glycerone phosphate: step 1/1. Functionally, involved in the gluconeogenesis. Catalyzes stereospecifically the conversion of dihydroxyacetone phosphate (DHAP) to D-glyceraldehyde-3-phosphate (G3P). In Sulfolobus acidocaldarius (strain ATCC 33909 / DSM 639 / JCM 8929 / NBRC 15157 / NCIMB 11770), this protein is Triosephosphate isomerase.